The sequence spans 418 residues: L-rhamnose isomerase (418 aa).

Residues His-261, Asp-293, and Asp-295 each coordinate Mn(2+).

Belongs to the rhamnose isomerase family. Mn(2+) is required as a cofactor.

The protein resides in the cytoplasm. It carries out the reaction L-rhamnopyranose = L-rhamnulose. It participates in carbohydrate degradation; L-rhamnose degradation; glycerone phosphate from L-rhamnose: step 1/3. Its function is as follows. Catalyzes the interconversion of L-rhamnose and L-rhamnulose. In Clostridium beijerinckii (strain ATCC 51743 / NCIMB 8052) (Clostridium acetobutylicum), this protein is L-rhamnose isomerase.